The primary structure comprises 493 residues: Probable cytosol aminopeptidase (493 aa).

2 residues coordinate Mn(2+): lysine 260 and aspartate 265. Residue lysine 272 is part of the active site. Residues aspartate 283, aspartate 342, and glutamate 344 each coordinate Mn(2+). Residue arginine 346 is part of the active site.

Belongs to the peptidase M17 family. Mn(2+) serves as cofactor.

The protein resides in the cytoplasm. The catalysed reaction is Release of an N-terminal amino acid, Xaa-|-Yaa-, in which Xaa is preferably Leu, but may be other amino acids including Pro although not Arg or Lys, and Yaa may be Pro. Amino acid amides and methyl esters are also readily hydrolyzed, but rates on arylamides are exceedingly low.. It carries out the reaction Release of an N-terminal amino acid, preferentially leucine, but not glutamic or aspartic acids.. Presumably involved in the processing and regular turnover of intracellular proteins. Catalyzes the removal of unsubstituted N-terminal amino acids from various peptides. The protein is Probable cytosol aminopeptidase of Clostridium perfringens (strain 13 / Type A).